The sequence spans 739 residues: Probable beta-glucosidase L (739 aa).

A signal peptide spans 1–17 (MQTLFLSLLAAAVTVHA). Asn-40 and Asn-224 each carry an N-linked (GlcNAc...) asparagine glycan. Asp-252 is a catalytic residue. Asn-398 carries N-linked (GlcNAc...) asparagine glycosylation.

This sequence belongs to the glycosyl hydrolase 3 family.

It localises to the secreted. It catalyses the reaction Hydrolysis of terminal, non-reducing beta-D-glucosyl residues with release of beta-D-glucose.. The protein operates within glycan metabolism; cellulose degradation. Functionally, beta-glucosidases are one of a number of cellulolytic enzymes involved in the degradation of cellulosic biomass. Catalyzes the last step releasing glucose from the inhibitory cellobiose. The polypeptide is Probable beta-glucosidase L (bglL) (Aspergillus fumigatus (strain CBS 144.89 / FGSC A1163 / CEA10) (Neosartorya fumigata)).